A 590-amino-acid polypeptide reads, in one-letter code: Heat shock protein 60, mitochondrial (590 aa).

The N-terminal 43 residues, methionine 1–leucine 43, are a transit peptide targeting the mitochondrion.

This sequence belongs to the chaperonin (HSP60) family.

The protein resides in the mitochondrion. Its function is as follows. May participate in assembly and/or disassembly of proteins imported into the mitochondrion. HSP60 are ATPases and have affinity for unfolded proteins. The sequence is that of Heat shock protein 60, mitochondrial (HSP60) from Ajellomyces capsulatus (Darling's disease fungus).